Consider the following 202-residue polypeptide: Na(+)-translocating NADH-quinone reductase subunit E (202 aa).

The next 6 membrane-spanning stretches (helical) occupy residues 4–24, 35–55, 81–101, 114–134, 144–164, and 180–200; these read LAGLFITAVFVENLALTFFLG, IEVAFGMGIAVIVVQTLTVPI, FLGLVSYLGVIAAIVQILEMF, GIYLPLIAVNCAILGGSLFMV, LVYGLGSGFGWALAIVALAGV, and LGITFISAGLMAMGFMAFSGI.

It belongs to the NqrDE/RnfAE family. Composed of six subunits; NqrA, NqrB, NqrC, NqrD, NqrE and NqrF.

The protein resides in the cell inner membrane. It catalyses the reaction a ubiquinone + n Na(+)(in) + NADH + H(+) = a ubiquinol + n Na(+)(out) + NAD(+). Its function is as follows. NQR complex catalyzes the reduction of ubiquinone-1 to ubiquinol by two successive reactions, coupled with the transport of Na(+) ions from the cytoplasm to the periplasm. NqrA to NqrE are probably involved in the second step, the conversion of ubisemiquinone to ubiquinol. The chain is Na(+)-translocating NADH-quinone reductase subunit E from Nitrosomonas europaea (strain ATCC 19718 / CIP 103999 / KCTC 2705 / NBRC 14298).